Here is a 150-residue protein sequence, read N- to C-terminus: D-aminoacyl-tRNA deacylase (150 aa).

Residues 136 to 137 carry the Gly-cisPro motif, important for rejection of L-amino acids motif; it reads GP.

The protein belongs to the DTD family. Homodimer.

It is found in the cytoplasm. It catalyses the reaction glycyl-tRNA(Ala) + H2O = tRNA(Ala) + glycine + H(+). It carries out the reaction a D-aminoacyl-tRNA + H2O = a tRNA + a D-alpha-amino acid + H(+). In terms of biological role, an aminoacyl-tRNA editing enzyme that deacylates mischarged D-aminoacyl-tRNAs. Also deacylates mischarged glycyl-tRNA(Ala), protecting cells against glycine mischarging by AlaRS. Acts via tRNA-based rather than protein-based catalysis; rejects L-amino acids rather than detecting D-amino acids in the active site. By recycling D-aminoacyl-tRNA to D-amino acids and free tRNA molecules, this enzyme counteracts the toxicity associated with the formation of D-aminoacyl-tRNA entities in vivo and helps enforce protein L-homochirality. This is D-aminoacyl-tRNA deacylase from Staphylococcus haemolyticus (strain JCSC1435).